A 294-amino-acid polypeptide reads, in one-letter code: Indole-3-glycerol phosphate synthase (294 aa).

Belongs to the TrpC family.

It carries out the reaction 1-(2-carboxyphenylamino)-1-deoxy-D-ribulose 5-phosphate + H(+) = (1S,2R)-1-C-(indol-3-yl)glycerol 3-phosphate + CO2 + H2O. The protein operates within amino-acid biosynthesis; L-tryptophan biosynthesis; L-tryptophan from chorismate: step 4/5. This Synechococcus sp. (strain WH7803) protein is Indole-3-glycerol phosphate synthase.